Here is a 577-residue protein sequence, read N- to C-terminus: Sulfite reductase [NADPH] hemoprotein beta-component (577 aa).

Positions 440, 446, 486, and 490 each coordinate [4Fe-4S] cluster. Residue Cys490 coordinates siroheme.

Belongs to the nitrite and sulfite reductase 4Fe-4S domain family. Alpha(8)-beta(8). The alpha component is a flavoprotein, the beta component is a hemoprotein. Siroheme is required as a cofactor. [4Fe-4S] cluster serves as cofactor.

The catalysed reaction is hydrogen sulfide + 3 NADP(+) + 3 H2O = sulfite + 3 NADPH + 4 H(+). It functions in the pathway sulfur metabolism; hydrogen sulfide biosynthesis; hydrogen sulfide from sulfite (NADPH route): step 1/1. Functionally, component of the sulfite reductase complex that catalyzes the 6-electron reduction of sulfite to sulfide. This is one of several activities required for the biosynthesis of L-cysteine from sulfate. This is Sulfite reductase [NADPH] hemoprotein beta-component from Vibrio cholerae serotype O1 (strain ATCC 39541 / Classical Ogawa 395 / O395).